The primary structure comprises 254 residues: tRNA (guanine-N(1)-)-methyltransferase (254 aa).

Residues glycine 115 and valine 135–leucine 140 contribute to the S-adenosyl-L-methionine site.

It belongs to the RNA methyltransferase TrmD family. Homodimer.

The protein resides in the cytoplasm. It carries out the reaction guanosine(37) in tRNA + S-adenosyl-L-methionine = N(1)-methylguanosine(37) in tRNA + S-adenosyl-L-homocysteine + H(+). Specifically methylates guanosine-37 in various tRNAs. In Francisella tularensis subsp. tularensis (strain FSC 198), this protein is tRNA (guanine-N(1)-)-methyltransferase.